Reading from the N-terminus, the 485-residue chain is Palmitoyltransferase ZDHHC1 (485 aa).

The disordered stretch occupies residues 1–41; it reads MYKMNICNKPSNKTAPEKSVWTAPAQPSGPSPELQGQRSRR. Residues 1-52 are Cytoplasmic-facing; the sequence is MYKMNICNKPSNKTAPEKSVWTAPAQPSGPSPELQGQRSRRNGWSWPPHPLQ. The segment at 1–271 is mediates interaction with STING1; it reads MYKMNICNKP…GHLLCFHIYL (271 aa). A helical membrane pass occupies residues 53–73; sequence IVAWLLYLFFAVIGFGILVPL. The Lumenal portion of the chain corresponds to 74-77; the sequence is LPHH. Residues 78 to 98 traverse the membrane as a helical segment; sequence WVPAGYACMGAIFAGHLVVHL. The Cytoplasmic segment spans residues 99–185; the sequence is TAVSIDPADA…YRLFLHSVAS (87 aa). The 51-residue stretch at 134–184 folds into the DHHC domain; the sequence is LHCNLCNVDVSARSKHCSACNKCVCGFDHHCKWLNNCVGERNYRLFLHSVA. Cysteine 164 functions as the S-palmitoyl cysteine intermediate in the catalytic mechanism. Residues 186-206 form a helical membrane-spanning segment; it reads ALLGVLLLVLVATYVFVEFFV. The Lumenal segment spans residues 207–241; the sequence is NPMRLRTNRHFEVLKNHTDVWFVFLPAAPVETQAP. The chain crosses the membrane as a helical span at residues 242–262; sequence AILALAALLILLGLLSTALLG. Residues 263-485 are Cytoplasmic-facing; it reads HLLCFHIYLM…RGRRVRPPFS (223 aa). Disordered stretches follow at residues 324-358 and 462-485; these read EPPG…GPPV and LWPP…PPFS. A compositionally biased stretch (basic residues) spans 475 to 485; the sequence is WRGRRVRPPFS.

Belongs to the DHHC palmitoyltransferase family. Interacts with STING1; ZDHHC1 constitutively interacts with STING1 and in presence of DNA viruses activates it by promoting its cGAMP-induced oligomerization and the recruitment of downstream signaling components. In terms of tissue distribution, widely expressed with significant expression in heart, brain, placenta, lung, liver, kidney, testis, thymus and small intestine. Expressed at lower levels in adult pancreas and lung.

It is found in the endosome membrane. Its subcellular location is the endoplasmic reticulum membrane. It localises to the golgi apparatus. The enzyme catalyses L-cysteinyl-[protein] + hexadecanoyl-CoA = S-hexadecanoyl-L-cysteinyl-[protein] + CoA. In terms of biological role, palmitoyltransferase that catalyzes the addition of palmitate onto various protein substrates, such as NCDN and NLRP3. Has a palmitoyltransferase activity toward NCDN and regulates NCDN association with endosome membranes through this palmitoylation. Acts as an activator of the NLRP3 inflammasome by mediating palmitoylation of 'Cys-130' and 'Cys-958' of NLRP3, thereby promoting NLRP3 phosphorylation and activation by NEK7. Functionally, also has a palmitoyltransferase activity-independent function in DNA virus-triggered and CGAS-mediated innate immune response. Functions as an activator of STING1 by promoting its cGAMP-induced oligomerization and the recruitment of downstream signaling components. The sequence is that of Palmitoyltransferase ZDHHC1 from Homo sapiens (Human).